The following is a 186-amino-acid chain: Shikimate kinase (186 aa).

Residue 15–20 (GAGKTT) participates in ATP binding. Residue threonine 19 participates in Mg(2+) binding. Aspartate 37, arginine 61, and glycine 83 together coordinate substrate. Arginine 121 contacts ATP. Position 140 (arginine 140) interacts with substrate.

The protein belongs to the shikimate kinase family. As to quaternary structure, monomer. Requires Mg(2+) as cofactor.

The protein resides in the cytoplasm. It catalyses the reaction shikimate + ATP = 3-phosphoshikimate + ADP + H(+). It participates in metabolic intermediate biosynthesis; chorismate biosynthesis; chorismate from D-erythrose 4-phosphate and phosphoenolpyruvate: step 5/7. Functionally, catalyzes the specific phosphorylation of the 3-hydroxyl group of shikimic acid using ATP as a cosubstrate. In Psychrobacter cryohalolentis (strain ATCC BAA-1226 / DSM 17306 / VKM B-2378 / K5), this protein is Shikimate kinase.